We begin with the raw amino-acid sequence, 221 residues long: GTP-binding nuclear protein Ran2 (221 aa).

The region spanning 10–174 (DYPSFKLVIV…LYLARKLAGD (165 aa)) is the Small GTPase Ran-type domain. 21–28 (DGGTGKTT) contributes to the GTP binding site. The interval 40–48 (KKYEPTIGV) is switch-I. GTP-binding positions include Gly-71, 125–128 (NKVD), and 153–155 (SAK). The interval 71–87 (GQEKFGGLRDGYYIHGQ) is switch-II.

It belongs to the small GTPase superfamily. Ran family. Found in a nuclear export complex with RanGTP, exportin and pre-miRNA.

The protein localises to the nucleus. In terms of biological role, GTP-binding protein involved in nucleocytoplasmic transport. Required for the import of protein into the nucleus and also for RNA export. Involved in chromatin condensation and control of cell cycle. This is GTP-binding nuclear protein Ran2 (RAN2) from Solanum lycopersicum (Tomato).